The following is a 752-amino-acid chain: Multifunctional tryptophan biosynthesis protein (752 aa).

Residues 3–202 (FTLLIDNYDS…IQMKGGKWGG (200 aa)) enclose the Glutamine amidotransferase type-1 domain. An L-glutamine-binding site is contributed by 58 to 60 (GPG). The Nucleophile; for GATase activity role is filled by cysteine 86. Residue 136–137 (SL) coordinates L-glutamine. Catalysis depends on for GATase activity residues histidine 176 and glutamate 178. An indole-3-glycerol phosphate synthase region spans residues 231 to 495 (ILNRIHAQRL…DTKAFLRSLI (265 aa)). The tract at residues 509–752 (LVKICGIRST…VEAFVKAVRG (244 aa)) is N-(5'-phosphoribosyl)anthranilate isomerase.

It carries out the reaction N-(5-phospho-beta-D-ribosyl)anthranilate = 1-(2-carboxyphenylamino)-1-deoxy-D-ribulose 5-phosphate. It catalyses the reaction 1-(2-carboxyphenylamino)-1-deoxy-D-ribulose 5-phosphate + H(+) = (1S,2R)-1-C-(indol-3-yl)glycerol 3-phosphate + CO2 + H2O. The enzyme catalyses chorismate + L-glutamine = anthranilate + pyruvate + L-glutamate + H(+). It functions in the pathway amino-acid biosynthesis; L-tryptophan biosynthesis; L-tryptophan from chorismate: step 1/5. The protein operates within amino-acid biosynthesis; L-tryptophan biosynthesis; L-tryptophan from chorismate: step 3/5. It participates in amino-acid biosynthesis; L-tryptophan biosynthesis; L-tryptophan from chorismate: step 4/5. Functionally, trifunctional enzyme bearing the Gln amidotransferase (GATase) domain of anthranilate synthase, indole-glycerolphosphate synthase, and phosphoribosylanthranilate isomerase activities. This Cryptococcus neoformans var. neoformans serotype D (strain JEC21 / ATCC MYA-565) (Filobasidiella neoformans) protein is Multifunctional tryptophan biosynthesis protein (TRP1).